Consider the following 65-residue polypeptide: uncharacterized protein (65 aa).

Residues 37 to 57 traverse the membrane as a helical segment; that stretch reads ILAIMTSVLPVLLIYIIWIFI.

It localises to the cell membrane. This is an uncharacterized protein from Bacillus subtilis (strain 168).